Reading from the N-terminus, the 301-residue chain is Fluoroquinolones export ATP-binding protein MT2762 (301 aa).

The 229-residue stretch at 18-246 (IRVRGLTFRY…RSRRRVRVEY (229 aa)) folds into the ABC transporter domain. 52-59 (GPSGAGKS) contributes to the ATP binding site.

Belongs to the ABC transporter superfamily. The complex is composed of 2 ATP-binding proteins and 2 transmembrane proteins.

It is found in the cell membrane. Its function is as follows. Part of the ABC transporter complex involved in fluoroquinolones export. Probably responsible for energy coupling to the transport system. This Mycobacterium tuberculosis (strain CDC 1551 / Oshkosh) protein is Fluoroquinolones export ATP-binding protein MT2762.